The following is a 185-amino-acid chain: DAN domain family member 5 (185 aa).

An N-terminal signal peptide occupies residues 1–23 (MFRSQFTTLLGLFSGAWLPTGSG). Asparagine 39 carries N-linked (GlcNAc...) asparagine glycosylation. Intrachain disulfides connect cysteine 97–cysteine 144, cysteine 111–cysteine 158, cysteine 121–cysteine 179, and cysteine 125–cysteine 181. The CTCK domain occupies 97-182 (CKALSFVQVI…TVLVQKCQCR (86 aa)).

Belongs to the DAN family. Expressed throughout the neural retina and in the photoreceptor nuclear layer. In the retina, widely expressed in inner nuclear layer, as well as in the ganglion cell layer.

The protein localises to the secreted. Antagonist of the extracellular signaling protein NODAL, which is required for correct left-right patterning during embryonic development. Antagonist of BMP4 signaling. Antagonist of TGF-beta signaling. Independently of its role in left-right axis establishment, plays a role during heart development, possibly through the regulation of TGF-beta/Nodal signaling pathway. Displays anti-angiogenic activity by inhibiting endothelial sprouting, migration, and proliferation. Once internalized by endothelial cells, may alter their redox and glycolytic balance. The protein is DAN domain family member 5 (Dand5) of Mus musculus (Mouse).